A 239-amino-acid chain; its full sequence is Small ribosomal subunit protein uS3 (239 aa).

Positions 39-107 (VREFLRKKLA…ATSINIEEIR (69 aa)) constitute a KH type-2 domain. Positions 215–239 (TSNTNELSDEKRNRRKPRNANRRKE) are disordered. The span at 227 to 239 (NRRKPRNANRRKE) shows a compositional bias: basic residues.

The protein belongs to the universal ribosomal protein uS3 family. In terms of assembly, part of the 30S ribosomal subunit. Forms a tight complex with proteins S10 and S14.

Binds the lower part of the 30S subunit head. Binds mRNA in the 70S ribosome, positioning it for translation. This chain is Small ribosomal subunit protein uS3, found in Dichelobacter nodosus (strain VCS1703A).